The sequence spans 141 residues: Nucleoside triphosphatase NudI (141 aa).

Residues 1 to 141 (MRQRTIVCPI…RLTFTQKGLL (141 aa)) enclose the Nudix hydrolase domain. Residues 38 to 59 (GGMEPGETMEEALRREIREELG) carry the Nudix box motif.

This sequence belongs to the Nudix hydrolase family. NudI subfamily. Monomer. The cofactor is Mg(2+).

The catalysed reaction is a ribonucleoside 5'-triphosphate + H2O = a ribonucleoside 5'-phosphate + diphosphate + H(+). It catalyses the reaction a 2'-deoxyribonucleoside 5'-triphosphate + H2O = a 2'-deoxyribonucleoside 5'-phosphate + diphosphate + H(+). The enzyme catalyses dUTP + H2O = dUMP + diphosphate + H(+). It carries out the reaction dTTP + H2O = dTMP + diphosphate + H(+). The catalysed reaction is dCTP + H2O = dCMP + diphosphate + H(+). In terms of biological role, catalyzes the hydrolysis of nucleoside triphosphates, with a preference for pyrimidine deoxynucleoside triphosphates (dUTP, dTTP and dCTP). This chain is Nucleoside triphosphatase NudI, found in Enterobacter sp. (strain 638).